The chain runs to 490 residues: Aspartyl/glutamyl-tRNA(Asn/Gln) amidotransferase subunit B (490 aa).

Belongs to the GatB/GatE family. GatB subfamily. In terms of assembly, heterotrimer of A, B and C subunits.

It carries out the reaction L-glutamyl-tRNA(Gln) + L-glutamine + ATP + H2O = L-glutaminyl-tRNA(Gln) + L-glutamate + ADP + phosphate + H(+). The enzyme catalyses L-aspartyl-tRNA(Asn) + L-glutamine + ATP + H2O = L-asparaginyl-tRNA(Asn) + L-glutamate + ADP + phosphate + 2 H(+). In terms of biological role, allows the formation of correctly charged Asn-tRNA(Asn) or Gln-tRNA(Gln) through the transamidation of misacylated Asp-tRNA(Asn) or Glu-tRNA(Gln) in organisms which lack either or both of asparaginyl-tRNA or glutaminyl-tRNA synthetases. The reaction takes place in the presence of glutamine and ATP through an activated phospho-Asp-tRNA(Asn) or phospho-Glu-tRNA(Gln). The polypeptide is Aspartyl/glutamyl-tRNA(Asn/Gln) amidotransferase subunit B (Prochlorococcus marinus (strain MIT 9312)).